The chain runs to 348 residues: Dihydroorotase (348 aa).

Positions 17 and 19 each coordinate Zn(2+). Substrate contacts are provided by residues 19–21 (HLR) and Asn-45. Positions 103, 140, and 178 each coordinate Zn(2+). Residue Lys-103 is modified to N6-carboxylysine. His-140 serves as a coordination point for substrate. Position 223 (Leu-223) interacts with substrate. Asp-251 is a binding site for Zn(2+). Asp-251 is a catalytic residue. Substrate-binding residues include His-255 and Ala-267.

The protein belongs to the metallo-dependent hydrolases superfamily. DHOase family. Class II DHOase subfamily. Homodimer. Requires Zn(2+) as cofactor.

It catalyses the reaction (S)-dihydroorotate + H2O = N-carbamoyl-L-aspartate + H(+). Its pathway is pyrimidine metabolism; UMP biosynthesis via de novo pathway; (S)-dihydroorotate from bicarbonate: step 3/3. Its function is as follows. Catalyzes the reversible cyclization of carbamoyl aspartate to dihydroorotate. In Shigella flexneri serotype 5b (strain 8401), this protein is Dihydroorotase.